The following is a 319-amino-acid chain: Acetyl-coenzyme A carboxylase carboxyl transferase subunit alpha (319 aa).

One can recognise a CoA carboxyltransferase C-terminal domain in the interval 35 to 296; sequence NIDEEVHRLR…KTQLLADLAD (262 aa).

It belongs to the AccA family. As to quaternary structure, acetyl-CoA carboxylase is a heterohexamer composed of biotin carboxyl carrier protein (AccB), biotin carboxylase (AccC) and two subunits each of ACCase subunit alpha (AccA) and ACCase subunit beta (AccD).

Its subcellular location is the cytoplasm. The catalysed reaction is N(6)-carboxybiotinyl-L-lysyl-[protein] + acetyl-CoA = N(6)-biotinyl-L-lysyl-[protein] + malonyl-CoA. It participates in lipid metabolism; malonyl-CoA biosynthesis; malonyl-CoA from acetyl-CoA: step 1/1. Component of the acetyl coenzyme A carboxylase (ACC) complex. First, biotin carboxylase catalyzes the carboxylation of biotin on its carrier protein (BCCP) and then the CO(2) group is transferred by the carboxyltransferase to acetyl-CoA to form malonyl-CoA. The polypeptide is Acetyl-coenzyme A carboxylase carboxyl transferase subunit alpha (Cronobacter sakazakii (strain ATCC BAA-894) (Enterobacter sakazakii)).